The sequence spans 485 residues: Sodium-coupled neutral amino acid symporter 1 (485 aa).

Residues 1 to 74 (MMHFKSGLEL…EYIPGTTSLG (74 aa)) lie on the Cytoplasmic side of the membrane. A Phosphoserine modification is found at Ser6. Thr11 is modified (phosphothreonine). Ser25, Ser28, Ser49, and Ser52 each carry phosphoserine. At Thr54 the chain carries Phosphothreonine. The residue at position 56 (Ser56) is a Phosphoserine. A helical membrane pass occupies residues 75–97 (MSVFNLSNAIMGSGILGLAFALA). Residues 98–112 (NTGILLFLILLTSVT) lie on the Extracellular side of the membrane. Residues 113–133 (LLSIYSINLLLICSKETGCMV) traverse the membrane as a helical segment. Topologically, residues 134-148 (YEKLGEQVFGTTGKL) are cytoplasmic. The helical transmembrane segment at 149–169 (VIFGATSLQNTGAMLSYLFIV) threads the bilayer. Residues 170–188 (KNELPSAIKSLMGEEDAFS) lie on the Extracellular side of the membrane. Residues 189-211 (AWYVDGRVLVVMVTFGIILPLCL) traverse the membrane as a helical segment. At 212-216 (LKNLG) the chain is on the cytoplasmic side. The helical transmembrane segment at 217–237 (YLGYTSGFSLSCMMFFLIVVI) threads the bilayer. Residues 238–273 (YKKFQTPCMSVEQNSTVSANVTDACTPKYVTFNSKT) are Extracellular-facing. Cys245 and Cys262 are oxidised to a cystine. 2 N-linked (GlcNAc...) asparagine glycosylation sites follow: Asn251 and Asn257. Residues 274 to 294 (VYALPTIAFAFVCHPSVLPIY) form a helical membrane-spanning segment. Over 295-310 (SELKDRSQKKMQMVSN) the chain is Cytoplasmic. The chain crosses the membrane as a helical span at residues 311 to 331 (ISFFAMFVMYFLTAIFGYLTF). Residues 332-348 (YEKVQSDLLHKYQSTGD) are Extracellular-facing. A helical membrane pass occupies residues 349 to 369 (ILILTVRLAVIVAVILTVPVL). Residues 370–391 (FFTVRSSLFELAKKTKFHLCRH) lie on the Cytoplasmic side of the membrane. The chain crosses the membrane as a helical span at residues 392–412 (VLVTIILLIIINLLVIFIPSM). Residues 413–414 (KD) are Extracellular-facing. A helical membrane pass occupies residues 415 to 435 (IFGVVGVTSANMLIFILPSSL). Residues 436 to 450 (YLKITNQDGDKGTQR) are Cytoplasmic-facing. Residues 451 to 471 (IWAALFLGLGVLFSLISIPLV) form a helical membrane-spanning segment. Over 472–485 (IYDWACSSGTDEGH) the chain is Extracellular.

The protein belongs to the amino acid/polyamine transporter 2 family. N-glycosylation plays an important role in the L-glutamine transport. As to expression, specifically expressed in brain and retina (at protein level). Also detected in spleen, small intestine and lung.

It is found in the cell membrane. The catalysed reaction is L-glutamine(in) + Na(+)(in) = L-glutamine(out) + Na(+)(out). The enzyme catalyses L-alanine(in) + Na(+)(in) = L-alanine(out) + Na(+)(out). It catalyses the reaction L-histidine(in) + Na(+)(in) = L-histidine(out) + Na(+)(out). It carries out the reaction L-asparagine(in) + Na(+)(in) = L-asparagine(out) + Na(+)(out). The catalysed reaction is L-serine(in) + Na(+)(in) = L-serine(out) + Na(+)(out). The enzyme catalyses L-cysteine(in) + Na(+)(in) = L-cysteine(out) + Na(+)(out). It catalyses the reaction L-methionine(in) + Na(+)(in) = L-methionine(out) + Na(+)(out). It carries out the reaction glycine(in) + Na(+)(in) = glycine(out) + Na(+)(out). The catalysed reaction is L-threonine(in) + Na(+)(in) = L-threonine(out) + Na(+)(out). The enzyme catalyses L-proline(in) + Na(+)(in) = L-proline(out) + Na(+)(out). With respect to regulation, inhibited by alpha-(methylamino)isobutyric acid (MeAIB). Inhibited by lithium, potassium, choline ions, N-methylglucamine. The pH dependence has an allosteric effect on the transport. Functionally, symporter that cotransports short-chain neutral amino acids and sodium ions from the extraccellular to the intracellular side of the cell membrane. The transport is elctrogenic, pH dependent and driven by the Na(+) electrochemical gradient. Participates in the astroglia-derived glutamine transport into GABAergic interneurons for neurotransmitter GABA de novo synthesis. May also contributes to amino acid transport in placental trophoblast. Regulates synaptic plasticity. In Mus musculus (Mouse), this protein is Sodium-coupled neutral amino acid symporter 1.